A 662-amino-acid chain; its full sequence is Capsid protein (662 aa).

Belongs to the anelloviridae capsid protein family.

It localises to the virion. In terms of biological role, self-assembles to form an icosahedral capsid with a T=1 symmetry, about 30 nm in diameter, and consisting of 60 capsid proteins. The capsid encapsulates the genomic DNA. Capsid protein is involved in attachment and entry into the host cell. This Homo sapiens (Human) protein is Capsid protein.